A 104-amino-acid polypeptide reads, in one-letter code: Large ribosomal subunit protein bL21 (104 aa).

Belongs to the bacterial ribosomal protein bL21 family. As to quaternary structure, part of the 50S ribosomal subunit. Contacts protein L20.

This protein binds to 23S rRNA in the presence of protein L20. This is Large ribosomal subunit protein bL21 from Kosmotoga olearia (strain ATCC BAA-1733 / DSM 21960 / TBF 19.5.1).